We begin with the raw amino-acid sequence, 120 residues long: uncharacterized protein (120 aa).

One can recognise an N-acetyltransferase domain in the interval 3–120 (IRYKKAFEKI…EKCEICHGSE (118 aa)).

This is an uncharacterized protein from Bacillus methanolicus.